The sequence spans 300 residues: GTPase Era (300 aa).

An Era-type G domain is found at arginine 8–glutamate 176. The G1 stretch occupies residues glycine 16–serine 23. Glycine 16–serine 23 contributes to the GTP binding site. Positions glutamine 42–histidine 46 are G2. The G3 stretch occupies residues aspartate 63 to glycine 66. Residues aspartate 63–methionine 67 and asparagine 125–aspartate 128 contribute to the GTP site. The segment at asparagine 125–aspartate 128 is G4. The interval isoleucine 155 to alanine 157 is G5. A KH type-2 domain is found at valine 199–glycine 283.

This sequence belongs to the TRAFAC class TrmE-Era-EngA-EngB-Septin-like GTPase superfamily. Era GTPase family. Monomer.

Its subcellular location is the cytoplasm. The protein resides in the cell inner membrane. Its function is as follows. An essential GTPase that binds both GDP and GTP, with rapid nucleotide exchange. Plays a role in 16S rRNA processing and 30S ribosomal subunit biogenesis and possibly also in cell cycle regulation and energy metabolism. This is GTPase Era from Pseudomonas savastanoi pv. phaseolicola (strain 1448A / Race 6) (Pseudomonas syringae pv. phaseolicola (strain 1448A / Race 6)).